Consider the following 407-residue polypeptide: Snake venom metalloproteinase ACLH (407 aa).

Positions 1–20 (MIQVLLVTLCLAAFPYQGSS) are cleaved as a signal peptide. Residues 21–187 (IILESGNVND…PIKKASQLNL (167 aa)) constitute a propeptide that is removed on maturation. The region spanning 193–389 (RYVELVTVVD…ENPQCILNKP (197 aa)) is the Peptidase M12B domain. 2 residues coordinate Ca(2+): Glu196 and Asp280. Cystine bridges form between Cys304–Cys384, Cys344–Cys368, and Cys346–Cys351. His329 contacts Zn(2+). Residue Glu330 is part of the active site. Residues His333 and His339 each contribute to the Zn(2+) site. N-linked (GlcNAc...) asparagine glycosylation is present at Asn367. 2 residues coordinate Ca(2+): Cys384 and Asn387.

This sequence belongs to the venom metalloproteinase (M12B) family. P-I subfamily. In terms of assembly, monomer. Requires Zn(2+) as cofactor. In terms of processing, contains sialic acid terminally alpha(2-6)-linked to galactose in a complex N-glycan chain. As to expression, expressed by the venom gland.

The protein resides in the secreted. In terms of biological role, this zinc hemorrhagic metalloproteinase has fibrino(geno)lytic activities. It causes hemorrhage and has myonecrotic activity on both fiber types I and II. The recombinant enzyme, without post-translational modifications, also has proteolytic activity, but does not show any hemorrhagic activity. In Agkistrodon contortrix laticinctus (Broad-banded copperhead), this protein is Snake venom metalloproteinase ACLH.